We begin with the raw amino-acid sequence, 653 residues long: Rab11 family-interacting protein 5 (653 aa).

Residues 5 to 146 form the C2 domain; sequence RGAEPAAGPS…AGRAQHTQWY (142 aa). Phosphoserine occurs at positions 176, 283, 286, 307, 357, and 367. The tract at residues 269 to 300 is disordered; sequence GPGAELLTRSPSRSSWLSTEGGRDSAQSPKLF. A compositionally biased stretch (polar residues) spans 277-286; that stretch reads RSPSRSSWLS. 2 disordered regions span residues 342–402 and 415–548; these read HIYN…AVLG and PGAS…RSSL. The segment covering 357–368 has biased composition (low complexity); sequence SISGSLPSSGSL. Residues 375–387 are compositionally biased toward basic and acidic residues; the sequence is FSEEGPRSTDDTW. Phosphoserine is present on residues Ser391 and Ser395. 2 stretches are compositionally biased toward basic and acidic residues: residues 420–430 and 447–460; these read PGEEEGARLPE and VAEKEGARKEERKP. A phosphoserine mark is found at Ser494, Ser538, Ser547, and Ser553. Residues 586 to 648 enclose the FIP-RBD domain; the sequence is KDSAVLDQSA…ETSPTLLQIP (63 aa).

Interacts with RAB11FIP4. Interacts with NAPG. Interacts with RO60. Interacts with RAB11A that has been activated by GTP binding. In terms of assembly, (Microbial infection) Interacts with Kaposi's sarcoma-associated herpesvirus/HHV-8 protein ORF45; this interaction results in the lysosomal degradation of ORF45 and the inhibition of viral particle release. In terms of processing, phosphorylated on serine and threonine residues. Phosphorylation at Ser-357 is PKA-dependent. In terms of tissue distribution, detected at low levels in heart, brain, placenta, lung, liver, adipocytes, kidney, spleen, skeletal muscle and pancreas.

The protein localises to the cytoplasm. It is found in the recycling endosome membrane. Its subcellular location is the early endosome membrane. The protein resides in the golgi apparatus membrane. It localises to the cytoplasmic vesicle. The protein localises to the secretory vesicle membrane. It is found in the mitochondrion membrane. Functionally, rab effector involved in protein trafficking from apical recycling endosomes to the apical plasma membrane. Involved in insulin granule exocytosis. May regulate V-ATPase intracellular transport in response to extracellular acidosis. This is Rab11 family-interacting protein 5 from Homo sapiens (Human).